Here is a 333-residue protein sequence, read N- to C-terminus: T-cell surface glycoprotein CD1b-2 (333 aa).

The N-terminal stretch at 1–20 is a signal peptide; that stretch reads MLLLPLLLLGVILPGGDNED. Topologically, residues 21 to 302 are extracellular; the sequence is VFQGPTSFHL…LYWGHPTSIG (282 aa). N-linked (GlcNAc...) asparagine glycosylation is found at asparagine 38, asparagine 75, and asparagine 146. Intrachain disulfides connect cysteine 120–cysteine 184, cysteine 149–cysteine 163, and cysteine 224–cysteine 279. Residues 185-295 enclose the Ig-like domain; sequence PRYLLGVLDA…LGDQDIILYW (111 aa). The chain crosses the membrane as a helical span at residues 303–323; it reads LILVAIIVPSLILSICLALWF. Topologically, residues 324–333 are cytoplasmic; that stretch reads WRRWSYQNIL. An Internalization signal motif is present at residues 329–332; sequence YQNI.

Heterodimer with B2M (beta-2-microglobulin). Interacts with saposin C.

The protein resides in the cell membrane. It is found in the endosome membrane. It localises to the lysosome membrane. Its function is as follows. Antigen-presenting protein that binds self and non-self lipid and glycolipid antigens and presents them to T-cell receptors on natural killer T-cells. This chain is T-cell surface glycoprotein CD1b-2, found in Ovis aries (Sheep).